A 727-amino-acid polypeptide reads, in one-letter code: Two-component response regulator-like APRR7 (727 aa).

A disordered region spans residues 1–47 (MNANEEGEGSRYPITDRKTGETKFDRVESRTEKHSEEEKTNGITMDV). Residues 14–40 (ITDRKTGETKFDRVESRTEKHSEEEKT) show a composition bias toward basic and acidic residues. The Response regulatory domain occupies 79 to 197 (RVLLVENDDC…ELKILWQHVW (119 aa)). Disordered regions lie at residues 203 to 265 (SSGS…KKAV), 291 to 312 (NPEF…QEHD), 339 to 416 (KDEP…KTLD), 464 to 487 (SRYN…SLQD), 509 to 560 (ESLP…QPLP), and 606 to 670 (VNGS…SQRE). The segment covering 246–259 (ASDGSSDGSGAQSS) has biased composition (low complexity). Composition is skewed to polar residues over residues 344 to 353 (SKTTGIMRQD), 467 to 487 (NPAS…SLQD), and 519 to 535 (VGSN…NNAF). Residues 538–555 (PGAPKVSSAGSSSVKHSS) show a composition bias toward low complexity. Residues 641-657 (GKNGNGDGSGSGSGSGS) are compositionally biased toward gly residues. The 43-residue stretch at 669–711 (REAALTKFRQKRKERCFRKKVRYQSRKKLAEQRPRVRGQFVRK) folds into the CCT domain.

It belongs to the ARR-like family. Phosphorylated. Phosphorylation varies throughout the diurnal cycle.

The protein localises to the nucleus. Functionally, transcriptional repressor of CCA1 and LHY, and positive regulator of LWD1 and LWD2 expression. Represses the expression of other clock proteins and master regulators of plant growth, development and response to abiotic stress. Involved in the positive and negative feedback loops of the circadian clock. Controls photoperiodic flowering response and temperature compensation. Expression of several members of the ARR-like family is controlled by circadian rhythm. APRR9, APRR7, and APRR5 coordinately act on the upstream region of the target genes to repress their expression from noon until midnight. The particular coordinated sequential expression of APRR9, APRR7, APRR5, APRR3 and APPR1 result to circadian waves that may be at the basis of the endogenous circadian clock. The polypeptide is Two-component response regulator-like APRR7 (APRR7) (Arabidopsis thaliana (Mouse-ear cress)).